A 215-amino-acid polypeptide reads, in one-letter code: 3-demethoxyubiquinol 3-hydroxylase (215 aa).

Residues E64, E94, H97, E146, E178, and H181 each coordinate Fe cation.

It belongs to the COQ7 family. Requires Fe cation as cofactor.

It localises to the cell membrane. It catalyses the reaction a 5-methoxy-2-methyl-3-(all-trans-polyprenyl)benzene-1,4-diol + AH2 + O2 = a 3-demethylubiquinol + A + H2O. Its pathway is cofactor biosynthesis; ubiquinone biosynthesis. Its function is as follows. Catalyzes the hydroxylation of 2-nonaprenyl-3-methyl-6-methoxy-1,4-benzoquinol during ubiquinone biosynthesis. The chain is 3-demethoxyubiquinol 3-hydroxylase from Pseudomonas savastanoi pv. phaseolicola (strain 1448A / Race 6) (Pseudomonas syringae pv. phaseolicola (strain 1448A / Race 6)).